We begin with the raw amino-acid sequence, 312 residues long: tRNA uridine(34) hydroxylase (312 aa).

The region spanning 145 to 235 (ENKNSVLVDM…GIIKYVRDAR (91 aa)) is the Rhodanese domain. Cys199 serves as the catalytic Cysteine persulfide intermediate.

The protein belongs to the TrhO family.

It catalyses the reaction uridine(34) in tRNA + AH2 + O2 = 5-hydroxyuridine(34) in tRNA + A + H2O. Catalyzes oxygen-dependent 5-hydroxyuridine (ho5U) modification at position 34 in tRNAs. The chain is tRNA uridine(34) hydroxylase from Buchnera aphidicola subsp. Baizongia pistaciae (strain Bp).